A 205-amino-acid polypeptide reads, in one-letter code: Interleukin-6 (205 aa).

The signal sequence occupies residues 1 to 21 (RFTSAFSLGLLLVTATAFPTP). A disulfide bridge links Cys64 with Cys70. At Ser73 the chain carries Phosphoserine. A disulfide bond links Cys93 and Cys103. N-linked (GlcNAc...) asparagine glycosylation is present at Asn164.

It belongs to the IL-6 superfamily. Component of a hexamer of two molecules each of IL6, IL6R and IL6ST; first binds to IL6R to associate with the signaling subunit IL6ST. Interacts with IL6R (via the N-terminal ectodomain); this interaction may be affected by IL6R-binding with SORL1, hence decreasing IL6 cis signaling. Interacts with SORL1 (via the N-terminal ectodomain); this interaction leads to IL6 internalization and lysosomal degradation. May form a trimeric complex with the soluble SORL1 ectodomain and soluble IL6R receptor; this interaction might stabilize circulating IL6, hence promoting IL6 trans signaling.

It localises to the secreted. In terms of biological role, cytokine with a wide variety of biological functions in immunity, tissue regeneration, and metabolism. Binds to IL6R, then the complex associates to the signaling subunit IL6ST/gp130 to trigger the intracellular IL6-signaling pathway. The interaction with the membrane-bound IL6R and IL6ST stimulates 'classic signaling', whereas the binding of IL6 and soluble IL6R to IL6ST stimulates 'trans-signaling'. Alternatively, 'cluster signaling' occurs when membrane-bound IL6:IL6R complexes on transmitter cells activate IL6ST receptors on neighboring receiver cells. Functionally, IL6 is a potent inducer of the acute phase response. Rapid production of IL6 contributes to host defense during infection and tissue injury, but excessive IL6 synthesis is involved in disease pathology. In the innate immune response, is synthesized by myeloid cells, such as macrophages and dendritic cells, upon recognition of pathogens through toll-like receptors (TLRs) at the site of infection or tissue injury. In the adaptive immune response, is required for the differentiation of B cells into immunoglobulin-secreting cells. Plays a major role in the differentiation of CD4(+) T cell subsets. Essential factor for the development of T follicular helper (Tfh) cells that are required for the induction of germinal-center formation. Required to drive naive CD4(+) T cells to the Th17 lineage. Also required for proliferation of myeloma cells and the survival of plasmablast cells. Acts as an essential factor in bone homeostasis and on vessels directly or indirectly by induction of VEGF, resulting in increased angiogenesis activity and vascular permeability. Induces, through 'trans-signaling' and synergistically with IL1B and TNF, the production of VEGF. Involved in metabolic controls, is discharged into the bloodstream after muscle contraction increasing lipolysis and improving insulin resistance. 'Trans-signaling' in central nervous system also regulates energy and glucose homeostasis. Mediates, through GLP-1, crosstalk between insulin-sensitive tissues, intestinal L cells and pancreatic islets to adapt to changes in insulin demand. Also acts as a myokine. Plays a protective role during liver injury, being required for maintenance of tissue regeneration. Also has a pivotal role in iron metabolism by regulating HAMP/hepcidin expression upon inflammation or bacterial infection. Through activation of IL6ST-YAP-NOTCH pathway, induces inflammation-induced epithelial regeneration. The protein is Interleukin-6 (IL6) of Orcinus orca (Killer whale).